Consider the following 326-residue polypeptide: Microtubule-associated protein RP/EB family member 2 (326 aa).

Ser-9 carries the post-translational modification Phosphoserine. Positions 56 to 158 (TMSRHDIIAW…FIQWFKKFYD (103 aa)) constitute a Calponin-homology (CH) domain. Position 166 is a phosphotyrosine (Tyr-166). Disordered regions lie at residues 170–239 (EARQ…DKDL) and 298–326 (ASDE…QEEY). The DCTN1-binding stretch occupies residues 186-326 (QIFNLPKKSH…EQQPQQQEEY (141 aa)). Residues 199–233 (SPTAGAAKSSPASKPGSTPSRPSSAKRASSSGSAS) are compositionally biased toward low complexity. A phosphoserine mark is found at Ser-218 and Ser-235. The region spanning 235–305 (SDKDLETQVI…LYASDEHEGH (71 aa)) is the EB1 C-terminal domain. The segment at 258-301 (EGVEKERDFYFGKLREIELLCQEHGQENDDLVQRLMDVLYASDE) is APC-binding. A compositionally biased stretch (basic and acidic residues) spans 299–316 (SDEHEGHPEEPEAEEQVH). Residues 317–326 (EQQPQQQEEY) are compositionally biased toward low complexity.

It belongs to the MAPRE family. Interacts with DCTN1. Interacts with APC (via C-terminal). Interacts with monomeric and polymerized tubulin. Interacts with SLAIN1. Interacts (via the N-terminal region) with BAG1. Interacts with ASB14. Interacts with HAX1; this interaction is essential for epidermal cell migration. In terms of processing, phosphorylated at Ser-235 by CK2 leading to enhanced cell adhesion. Phosphorylated by CDK1 and AURKB during mitosis reduces the binding affinity of MAPRE2 for microtubules. Post-translationally, ubiquitinated in an ASB14-dependent manner; leading to proteasomal degradation.

The protein localises to the cytoplasm. It localises to the cytoskeleton. In terms of biological role, adapter protein that is involved in microtubule polymerization, and spindle function by stabilizing microtubules and anchoring them at centrosomes. Therefore, ensures mitotic progression and genome stability. Acts as a central regulator of microtubule reorganization in apico-basal epithelial differentiation. Plays a role during oocyte meiosis by regulating microtubule dynamics. Participates in neurite growth by interacting with plexin B3/PLXNB3 and microtubule reorganization during apico-basal epithelial differentiation. Also plays an essential role for cell migration and focal adhesion dynamics. Mechanistically, recruits HAX1 to microtubules in order to regulate focal adhesion dynamics. This Bos taurus (Bovine) protein is Microtubule-associated protein RP/EB family member 2 (MAPRE2).